The following is a 107-amino-acid chain: U1-lycotoxin-Ls1b (107 aa).

Positions 1–20 (MMKVLVVVALLATLISYSSS) are cleaved as a signal peptide. Positions 21–41 (EGIDDLEADELLSLMANEQTR) are excised as a propeptide. 4 disulfide bridges follow: Cys-44–Cys-59, Cys-51–Cys-68, Cys-58–Cys-86, and Cys-70–Cys-84.

This sequence belongs to the neurotoxin 19 (CSTX) family. 04 (U1-Lctx) subfamily. In terms of tissue distribution, expressed by the venom gland.

It is found in the secreted. The chain is U1-lycotoxin-Ls1b from Lycosa singoriensis (Wolf spider).